The chain runs to 275 residues: Large ribosomal subunit protein uL2c (275 aa).

The interval 224-263 is disordered; it reads VMNPVDHPHGGGEGRAPIGRKRPLTPWGRPALGKKSRKNH.

Belongs to the universal ribosomal protein uL2 family. Part of the 50S ribosomal subunit.

Its subcellular location is the plastid. It localises to the chloroplast. In Chaetosphaeridium globosum (Charophycean green alga), this protein is Large ribosomal subunit protein uL2c (rpl2).